Reading from the N-terminus, the 280-residue chain is Putative pyruvate, phosphate dikinase regulatory protein (280 aa).

An ADP-binding site is contributed by 147 to 154; sequence GASRSSKT.

It belongs to the pyruvate, phosphate/water dikinase regulatory protein family. PDRP subfamily.

The catalysed reaction is N(tele)-phospho-L-histidyl/L-threonyl-[pyruvate, phosphate dikinase] + ADP = N(tele)-phospho-L-histidyl/O-phospho-L-threonyl-[pyruvate, phosphate dikinase] + AMP + H(+). It carries out the reaction N(tele)-phospho-L-histidyl/O-phospho-L-threonyl-[pyruvate, phosphate dikinase] + phosphate + H(+) = N(tele)-phospho-L-histidyl/L-threonyl-[pyruvate, phosphate dikinase] + diphosphate. Functionally, bifunctional serine/threonine kinase and phosphorylase involved in the regulation of the pyruvate, phosphate dikinase (PPDK) by catalyzing its phosphorylation/dephosphorylation. This chain is Putative pyruvate, phosphate dikinase regulatory protein, found in Pelobacter propionicus (strain DSM 2379 / NBRC 103807 / OttBd1).